Reading from the N-terminus, the 176-residue chain is NAD(P)H-quinone oxidoreductase subunit 6, chloroplastic (176 aa).

5 helical membrane passes run 10–30 (FLLV…VLLP), 32–52 (PIFS…LYIL), 61–81 (AQLL…VMFM), 92–112 (LWTV…FSLI), and 152–172 (FFLP…GAIS).

This sequence belongs to the complex I subunit 6 family. NDH is composed of at least 16 different subunits, 5 of which are encoded in the nucleus.

The protein resides in the plastid. It is found in the chloroplast thylakoid membrane. The catalysed reaction is a plastoquinone + NADH + (n+1) H(+)(in) = a plastoquinol + NAD(+) + n H(+)(out). It carries out the reaction a plastoquinone + NADPH + (n+1) H(+)(in) = a plastoquinol + NADP(+) + n H(+)(out). NDH shuttles electrons from NAD(P)H:plastoquinone, via FMN and iron-sulfur (Fe-S) centers, to quinones in the photosynthetic chain and possibly in a chloroplast respiratory chain. The immediate electron acceptor for the enzyme in this species is believed to be plastoquinone. Couples the redox reaction to proton translocation, and thus conserves the redox energy in a proton gradient. The sequence is that of NAD(P)H-quinone oxidoreductase subunit 6, chloroplastic (ndhG) from Lobularia maritima (Sweet alyssum).